Consider the following 179-residue polypeptide: Tetratricopeptide repeat protein 36 (179 aa).

TPR repeat units follow at residues 43–76 (SSQL…CPLN), 77–110 (PSAY…AGPK), and 115–148 (CQAY…GSSF).

The protein belongs to the TTC36 family.

This is Tetratricopeptide repeat protein 36 from Caenorhabditis briggsae.